We begin with the raw amino-acid sequence, 271 residues long: tRNA (guanine-N(1)-)-methyltransferase (271 aa).

S-adenosyl-L-methionine contacts are provided by residues Gly-120 and 145–150; that span reads IGDYVL.

It belongs to the RNA methyltransferase TrmD family. Homodimer.

The protein localises to the cytoplasm. The enzyme catalyses guanosine(37) in tRNA + S-adenosyl-L-methionine = N(1)-methylguanosine(37) in tRNA + S-adenosyl-L-homocysteine + H(+). Specifically methylates guanosine-37 in various tRNAs. The chain is tRNA (guanine-N(1)-)-methyltransferase from Bifidobacterium longum (strain NCC 2705).